A 21-amino-acid polypeptide reads, in one-letter code: C-phycocyanin alpha subunit (21 aa).

The protein belongs to the phycobiliprotein family. Heterodimer of an alpha and a beta subunit, which further assembles into trimers and the trimers into hexamers. Contains one covalently linked bilin chromophore.

The protein resides in the cellular thylakoid membrane. Light-harvesting photosynthetic bile pigment-protein from the phycobiliprotein complex (phycobilisome, PBS). Phycocyanin is the major phycobiliprotein in the PBS rod. The protein is C-phycocyanin alpha subunit of Anabaena sp. (strain L31).